The chain runs to 606 residues: Armadillo repeat-containing X-linked protein 5 (606 aa).

The tract at residues 1 to 85 (MIGSKTKRKA…KVKKKKDKTN (85 aa)) is disordered. Positions 15-26 (GASSKPGTNSPA) are enriched in polar residues. Positions 40-59 (VKAEPKEEWGNQAEARDEAV) are enriched in basic and acidic residues. ARM repeat units follow at residues 349–388 (CKSR…GISP), 470–509 (VKFD…CLSK), 511–551 (QANT…NINF), and 568–606 (SELI…ILKL).

It belongs to the eutherian X-chromosome-specific Armcx family. Highly expressed in the developing neural tissues, neural crest derivatives and hind limbs.

This Mus musculus (Mouse) protein is Armadillo repeat-containing X-linked protein 5 (Armcx5).